We begin with the raw amino-acid sequence, 195 residues long: Transcription factor 15 (195 aa).

The segment at 44–65 (LEAARRGPGPGSGRRASNGAGP) is disordered. Low complexity predominate over residues 56–65 (GRRASNGAGP). Position 60 is a phosphoserine (serine 60). Residues 70–122 (RQRQAANARERDRTQSVNTAFTALRTLIPTEPVDRKLSKIETLRLASSYIAHL) enclose the bHLH domain.

As to quaternary structure, heterodimer; efficient DNA binding requires dimerization with another bHLH protein, such as TCF3/E12. Interacts with MEOX2. As to expression, expressed in heart and skeletal muscle. Specifically expressed in a subpopulation of embryonic stem cells (ESCs), that are still undifferentiated but primed for ifferentiation. Expressed in hematopoietic stem cells (HSCs).

The protein resides in the nucleus. Functionally, early transcription factor that plays a key role in somitogenesis, paraxial mesoderm development and regulation of stem cell pluripotency. Essential for the mesenchymal to epithelial transition associated with somite formation. Required for somite morphogenesis, thereby regulating patterning of the axial skeleton and skeletal muscles. Required for proper localization of somite epithelium markers during the mesenchymal to epithelial transition. Also plays a key role in regulation of stem cell pluripotency. Promotes pluripotency exit of embryonic stem cells (ESCs) by priming ESCs for differentiation. Acts as a key regulator of self-renewal of hematopoietic stem cells (HSCs) by mediating HSCs quiescence and long-term self-renewal. Together with MEOX2, regulates transcription in heart endothelial cells to regulate fatty acid transport across heart endothelial cells. Acts by forming a heterodimer with another helix-loop-helix (bHLH) protein, such as TCF3/E12, that binds DNA on E-box motifs (5'-CANNTG-3') and activates transcription of target genes. The protein is Transcription factor 15 of Mus musculus (Mouse).